A 167-amino-acid polypeptide reads, in one-letter code: uncharacterized protein (167 aa).

This sequence to A.aeolicus aq_328.

This is an uncharacterized protein from Aquifex aeolicus (strain VF5).